The chain runs to 1544 residues: Arf-GAP with Rho-GAP domain, ANK repeat and PH domain-containing protein 3 (1544 aa).

Residues 4–68 form the SAM domain; it reads PQDLDIAVWL…LRLLQTGTEE (65 aa). Disordered regions lie at residues 64-147 and 167-194; these read TGTE…EQSS and GRAQAAQDKAPDSSQISAPTPALRPTTG. 2 stretches are compositionally biased toward pro residues: residues 82–97 and 130–139; these read SPSPAPQAQPPKPVPK and EPSPRPPPLP. PH domains lie at 287–379 and 394–483; these read TPLL…SCLK and RPLR…EAVT. Residues 480–611 form the Arf-GAP domain; it reads EAVTETLSDY…LFRKPHPQYP (132 aa). The C4-type zinc-finger motif lies at 504–527; it reads CADCGSSRPDWAAVNLGVVICKQC. The 182-residue stretch at 907–1088 folds into the Rho-GAP domain; sequence TGLQEQQMSR…ELIDGYISVF (182 aa). Positions 1117-1210 constitute a Ras-associating domain; it reads GDLIMEVYIE…ASLLLKKVPL (94 aa). The region spanning 1223 to 1325 is the PH 3 domain; the sequence is ESPRVGLLRC…WTTSILKAQH (103 aa). Thr-1348 is modified (phosphothreonine). Tyr-1403 and Tyr-1408 each carry phosphotyrosine. A disordered region spans residues 1422-1544; the sequence is STSFSTTREW…SSPPSSQPLT (123 aa). Residues 1438–1457 are compositionally biased toward polar residues; it reads PLTSQKSLDQPFLSKSSTLG. Phosphoserine occurs at positions 1444 and 1480. 2 stretches are compositionally biased toward low complexity: residues 1482 to 1492 and 1502 to 1527; these read EEQLLQELSSL and GLGSPSQPSSPQSPSPTGLPTQTPGF.

As to quaternary structure, interacts (via SAM domain) with INPPL1/SHIP2. In terms of processing, tyrosine phosphorylated at a low basal level. PDGF treatment stimulates phosphorylation. Tyrosine phosphorylation is increased in cells that are in the process of becoming attached to a substrate and that start spreading and flattening.

The protein resides in the cytoplasm. The protein localises to the cytoskeleton. Its subcellular location is the cell membrane. It is found in the cell projection. It localises to the lamellipodium. The protein resides in the ruffle. In terms of biological role, phosphatidylinositol 3,4,5-trisphosphate-dependent GTPase-activating protein that modulates actin cytoskeleton remodeling by regulating ARF and RHO family members. Is activated by phosphatidylinositol 3,4,5-trisphosphate (PtdIns(3,4,5)P3) binding. Can be activated by phosphatidylinositol 3,4-bisphosphate (PtdIns(3,4,5)P2) binding, albeit with lower efficiency. Acts on ARF6, RAC1, RHOA and CDC42. Plays a role in the internalization of anthrax toxin. This chain is Arf-GAP with Rho-GAP domain, ANK repeat and PH domain-containing protein 3 (ARAP3), found in Homo sapiens (Human).